Reading from the N-terminus, the 478-residue chain is Lysine-rich nucleolar protein 1 (478 aa).

Residues 1–231 (MVSKTQKADL…THQEGDILLV (231 aa)) form a disordered region. K7 is covalently cross-linked (Glycyl lysine isopeptide (Lys-Gly) (interchain with G-Cter in SUMO2)). A compositionally biased stretch (basic residues) spans 17–27 (KKKKKKKKKRV). The span at 33-45 (EPETQYSVLNSND) shows a compositional bias: polar residues. Phosphoserine is present on residues S51 and S59. The segment covering 54–63 (RATSPSNNVD) has biased composition (polar residues). 2 stretches are compositionally biased toward basic residues: residues 73-82 (SKRKKKKKSC) and 120-129 (EKKKKRRKSL). Residue K140 forms a Glycyl lysine isopeptide (Lys-Gly) (interchain with G-Cter in SUMO2) linkage. S142 carries the post-translational modification Phosphoserine. The segment covering 143–153 (PDPKHAKEVSK) has biased composition (basic and acidic residues). Composition is skewed to basic residues over residues 154–165 (AGRKSKKQRKEK) and 204–222 (QKRK…KKKT). K250 participates in a covalent cross-link: Glycyl lysine isopeptide (Lys-Gly) (interchain with G-Cter in SUMO1); alternate. K250 participates in a covalent cross-link: Glycyl lysine isopeptide (Lys-Gly) (interchain with G-Cter in SUMO2); alternate. A disordered region spans residues 258–314 (PIDSPKAPGKKKVKSKKKVEQPVGEGLAVKRKKKKKKRKENGVKEDPWQEEKEESDT). S261 carries the phosphoserine modification. Residues 265–274 (PGKKKVKSKK) show a composition bias toward basic residues. Glycyl lysine isopeptide (Lys-Gly) (interchain with G-Cter in SUMO2) cross-links involve residues K275 and K287. Basic residues predominate over residues 286–296 (VKRKKKKKKRK). Residues 297–307 (ENGVKEDPWQE) show a composition bias toward basic and acidic residues. K309 is covalently cross-linked (Glycyl lysine isopeptide (Lys-Gly) (interchain with G-Cter in SUMO2)). The interval 310 to 478 (EESDTDLEVV…NASKSIKLQD (169 aa)) is interaction with ZNF106. A Phosphoserine modification is found at S312. The residue at position 314 (T314) is a Phosphothreonine. A Glycyl lysine isopeptide (Lys-Gly) (interchain with G-Cter in SUMO2) cross-link involves residue K323. Residues 340-357 (QEEIDRESGKTEASEPKK) are compositionally biased toward basic and acidic residues. Positions 340 to 378 (QEEIDRESGKTEASEPKKWTVGLSVKTEASEPKKWTGTQ) are disordered. Glycyl lysine isopeptide (Lys-Gly) (interchain with G-Cter in SUMO2) cross-links involve residues K373, K393, K395, K427, and K462.

Interacts with ZNF106. Expressed in testis.

The protein resides in the nucleus. It is found in the nucleolus. This Mus musculus (Mouse) protein is Lysine-rich nucleolar protein 1 (Knop1).